A 314-amino-acid polypeptide reads, in one-letter code: Olfactory receptor 5G3 (314 aa).

The Extracellular segment spans residues 1–24 (MEDKNQTVVTEFLLLGLTDHPYQK). Asparagine 5 carries an N-linked (GlcNAc...) asparagine glycan. Residues 25–45 (IVLFFMFLFVYLITLGGNLGM) traverse the membrane as a helical segment. Residues 46–97 (ITLIWIDPRLHTPMYFFLRHLSFVDICSSSSVVPKMLCNIFAEKKDITFLGC) are Cytoplasmic-facing. Cysteines 97 and 179 form a disulfide. Residues 98–118 (AAQMWFFGLFEAAECFLLAAM) form a helical membrane-spanning segment. Topologically, residues 119–143 (AYDRYVAICKPLLYTLIMSQQVCMQ) are extracellular. A helical membrane pass occupies residues 144 to 164 (LVVGPYAMALISTMTHTIFTF). The Cytoplasmic segment spans residues 165-167 (CLP). A helical membrane pass occupies residues 168–188 (FCGSNIINHFFCDIFPLLSLA). The Extracellular portion of the chain corresponds to 189 to 196 (CADTWVNK). The helical transmembrane segment at 197–217 (FVLFVLAGAIGVLSGLIIMVS) threads the bilayer. At 218 to 237 (YICILMTILKIQTADGKQKA) the chain is on the cytoplasmic side. Residues 238-258 (FFTCFSHLAAVSILYGTLFLI) traverse the membrane as a helical segment. Over 259 to 268 (YVRPSSSSSL) the chain is Extracellular. The helical transmembrane segment at 269–289 (GIYKVISLFYTVVIPMVNPLI) threads the bilayer. At 290-314 (YSLRNKEVKDAFRRKIERKKFIIGR) the chain is on the cytoplasmic side.

Belongs to the G-protein coupled receptor 1 family.

It is found in the cell membrane. Functionally, odorant receptor. The chain is Olfactory receptor 5G3 (OR5G3) from Homo sapiens (Human).